Consider the following 458-residue polypeptide: Bifunctional protein GlmU (458 aa).

The segment at 1 to 230 is pyrophosphorylase; that stretch reads MSLPTYSKLN…EWQVAGINSK (230 aa). UDP-N-acetyl-alpha-D-glucosamine contacts are provided by residues 14–17, lysine 28, glutamine 79, and 84–85; these read LAAG and GT. Aspartate 108 lines the Mg(2+) pocket. UDP-N-acetyl-alpha-D-glucosamine contacts are provided by glycine 141, glutamate 155, asparagine 170, and asparagine 228. Asparagine 228 serves as a coordination point for Mg(2+). The segment at 231-251 is linker; it reads QDLAALERVYQGRYAARLLAK. The segment at 252–458 is N-acetyltransferase; the sequence is GVTLADPSRI…NWKRPEKVKK (207 aa). The UDP-N-acetyl-alpha-D-glucosamine site is built by arginine 334 and lysine 352. Histidine 364 functions as the Proton acceptor in the catalytic mechanism. 2 residues coordinate UDP-N-acetyl-alpha-D-glucosamine: tyrosine 367 and asparagine 378. Acetyl-CoA-binding positions include alanine 381, 387 to 388, serine 406, alanine 424, and arginine 441; that span reads NY.

In the N-terminal section; belongs to the N-acetylglucosamine-1-phosphate uridyltransferase family. It in the C-terminal section; belongs to the transferase hexapeptide repeat family. As to quaternary structure, homotrimer. Mg(2+) is required as a cofactor.

It localises to the cytoplasm. The catalysed reaction is alpha-D-glucosamine 1-phosphate + acetyl-CoA = N-acetyl-alpha-D-glucosamine 1-phosphate + CoA + H(+). It carries out the reaction N-acetyl-alpha-D-glucosamine 1-phosphate + UTP + H(+) = UDP-N-acetyl-alpha-D-glucosamine + diphosphate. Its pathway is nucleotide-sugar biosynthesis; UDP-N-acetyl-alpha-D-glucosamine biosynthesis; N-acetyl-alpha-D-glucosamine 1-phosphate from alpha-D-glucosamine 6-phosphate (route II): step 2/2. The protein operates within nucleotide-sugar biosynthesis; UDP-N-acetyl-alpha-D-glucosamine biosynthesis; UDP-N-acetyl-alpha-D-glucosamine from N-acetyl-alpha-D-glucosamine 1-phosphate: step 1/1. It participates in bacterial outer membrane biogenesis; LPS lipid A biosynthesis. Catalyzes the last two sequential reactions in the de novo biosynthetic pathway for UDP-N-acetylglucosamine (UDP-GlcNAc). The C-terminal domain catalyzes the transfer of acetyl group from acetyl coenzyme A to glucosamine-1-phosphate (GlcN-1-P) to produce N-acetylglucosamine-1-phosphate (GlcNAc-1-P), which is converted into UDP-GlcNAc by the transfer of uridine 5-monophosphate (from uridine 5-triphosphate), a reaction catalyzed by the N-terminal domain. The protein is Bifunctional protein GlmU of Methylobacillus flagellatus (strain ATCC 51484 / DSM 6875 / VKM B-1610 / KT).